The chain runs to 284 residues: Nucleotide-binding protein Shal_3708 (284 aa).

8-15 (GRSGSGKS) serves as a coordination point for ATP. 56–59 (DIRN) is a binding site for GTP.

The protein belongs to the RapZ-like family.

In terms of biological role, displays ATPase and GTPase activities. This is Nucleotide-binding protein Shal_3708 from Shewanella halifaxensis (strain HAW-EB4).